The primary structure comprises 707 residues: Solute carrier family 15 member 1 (707 aa).

The helical transmembrane segment at 1–21 (MGMSKSLSCFGYPLSIFFIVV) threads the bilayer. Residues 22-53 (NEFCERFSYYGMRALLILYFRNFIGWDDNLST) are Extracellular-facing. Asn-50 is a glycosylation site (N-linked (GlcNAc...) asparagine). A helical transmembrane segment spans residues 54-74 (VIYHTFVALCYLTPILGALIA). The Cytoplasmic portion of the chain corresponds to 75 to 82 (DAWLGKFK). Residues 83–103 (TIVWLSIVYTIGQAVTSLSSV) traverse the membrane as a helical segment. Topologically, residues 104–118 (NELTDNNHDGTPDSL) are extracellular. A helical membrane pass occupies residues 119 to 139 (PVHVAVCMIGLLLIALGTGGI). Topologically, residues 140–161 (KPCVSAFGGDQFEEGQEKQRNR) are cytoplasmic. The chain crosses the membrane as a helical span at residues 162 to 182 (FFSIFYLAINAGSLLSTIITP). At 183–198 (MVRVQQCGIHVKQACY) the chain is on the extracellular side. Residues 199 to 219 (PLAFGIPAILMAVSLIVFIIG) form a helical membrane-spanning segment. The Cytoplasmic portion of the chain corresponds to 220–276 (SGMYKKFKPQGNILSKVVKCICFAIKNRFRHRSKQFPKRAHWLDWAKEKYDERLIAQ). The chain crosses the membrane as a helical span at residues 277 to 297 (IKMVTRVLFLYIPLPMFWALF). The Extracellular segment spans residues 298 to 327 (DQQGSRWTLQATTMSGRIGILEIQPDQMQT). A helical membrane pass occupies residues 328–348 (VNTILIIILVPIMDAVVYPLI). Over 349–361 (AKCGLNFTSLKKM) the chain is Cytoplasmic. The helical transmembrane segment at 362-382 (TIGMFLASMAFVAAAILQVEI) threads the bilayer. At 383-583 (DKTLPVFPKA…PPNTMNMAWQ (201 aa)) the chain is on the extracellular side. Residues 383–583 (DKTLPVFPKA…PPNTMNMAWQ (201 aa)) are extracellular domain (ECD). Residues Asn-439, Asn-498, and Asn-513 are each glycosylated (N-linked (GlcNAc...) asparagine). A helical membrane pass occupies residues 584–604 (IPQYFLITSGEVVFSITGLEF). Over 605–618 (SYSQAPSNMKSVLQ) the chain is Cytoplasmic. The helical transmembrane segment at 619–639 (AGWLLTVAVGNIIVLIVAGAG) threads the bilayer. The Extracellular segment spans residues 640–644 (QINKQ). A helical membrane pass occupies residues 645–665 (WAEYILFAALLLVVCVIFAIM). The Cytoplasmic segment spans residues 666–707 (ARFYTYVNPAEIEAQFEEDEKKKNPEKNDLYPSLAPVSQTQM). Residues 682–707 (EEDEKKKNPEKNDLYPSLAPVSQTQM) are disordered. The span at 684–694 (DEKKKNPEKND) shows a compositional bias: basic and acidic residues.

It belongs to the major facilitator superfamily. Proton-dependent oligopeptide transporter (POT/PTR) (TC 2.A.17) family. In terms of assembly, interacts (via extracellular domain region) with trypsin. In terms of tissue distribution, intestine, kidney, liver and low in brain.

It is found in the apical cell membrane. The catalysed reaction is a dipeptide(out) + H(+)(out) = a dipeptide(in) + H(+)(in). It carries out the reaction an L-amino acid tripeptide(out) + H(+)(out) = an L-amino acid tripeptide(in) + H(+)(in). It catalyses the reaction L-alanyl-L-lysine(out) + H(+)(out) = L-alanyl-L-lysine(in) + H(+)(in). The enzyme catalyses L-alanyl-L-proline(out) + H(+)(out) = L-alanyl-L-proline(in) + H(+)(in). The catalysed reaction is L-alanyl-L-valine(out) + H(+)(out) = L-alanyl-L-valine(in) + H(+)(in). It carries out the reaction carnosine(out) + H(+)(out) = carnosine(in) + H(+)(in). It catalyses the reaction glycyl-L-glutamine(out) + H(+)(out) = glycyl-L-glutamine(in) + H(+)(in). The enzyme catalyses glycyl-L-leucine(out) + H(+)(out) = glycyl-L-leucine(in) + H(+)(in). The catalysed reaction is glycyl-L-proline(out) + H(+)(out) = glycyl-L-proline(in) + H(+)(in). It carries out the reaction glycyl-sarcosine(out) + H(+)(out) = glycyl-sarcosine(in) + H(+)(in). It catalyses the reaction L-leucyl-L-leucine(out) + H(+)(out) = L-leucyl-L-leucine(in) + H(+)(in). The enzyme catalyses L-leucyl-L-proline(out) + H(+)(out) = L-leucyl-L-proline(in) + H(+)(in). The catalysed reaction is L-phenylalanyl-L-leucine(out) + H(+)(out) = L-phenylalanyl-L-leucine(in) + H(+)(in). It carries out the reaction L-phenylalanyl-L-phenylalanine(out) + H(+)(out) = L-phenylalanyl-L-phenylalanine(in) + H(+)(in). It catalyses the reaction L-lysyl-glycine(out) + H(+)(out) = L-lysyl-glycine(in) + H(+)(in). The enzyme catalyses L-tyrosylglycine(out) + H(+)(out) = L-tyrosylglycine(in) + H(+)(in). The catalysed reaction is L-alanyl-L-aspartate(out) + 2 H(+)(out) = L-alanyl-L-aspartate(in) + 2 H(+)(in). It carries out the reaction L-aspartyl-glycine(out) + 2 H(+)(out) = L-aspartyl-glycine(in) + 2 H(+)(in). It catalyses the reaction glycyl-L-aspartate(out) + 2 H(+)(out) = glycyl-L-aspartate(in) + 2 H(+)(in). The enzyme catalyses glycyl-L-glutamate(out) + 2 H(+)(out) = glycyl-L-glutamate(in) + 2 H(+)(in). The catalysed reaction is L-alanyl-L-leucyl-L-alanine(out) + H(+)(out) = L-alanyl-L-leucyl-L-alanine(in) + H(+)(in). It carries out the reaction L-alanyl-L-prolylglycine(out) + H(+)(out) = L-alanyl-L-prolylglycine(in) + H(+)(in). It catalyses the reaction glycylglycyl-L-isoleucine(out) + H(+)(out) = glycylglycyl-L-isoleucine(in) + H(+)(in). The enzyme catalyses glycylglycyl-L-proline(out) + H(+)(out) = glycylglycyl-L-proline(in) + H(+)(in). The catalysed reaction is L-methionyl-L-phenylalanyl-L-methionine(out) + H(+)(out) = L-methionyl-L-phenylalanyl-L-methionine(in) + H(+)(in). It carries out the reaction N-acetyl-D-muramoyl-L-alanyl-D-isoglutamine(out) + 2 H(+)(out) = N-acetyl-D-muramoyl-L-alanyl-D-isoglutamine(in) + 2 H(+)(in). It catalyses the reaction N(alpha)-formyl-L-methionyl-L-leucyl-L-phenylalanine(out) + 2 H(+)(out) = N(alpha)-formyl-L-methionyl-L-leucyl-L-phenylalanine(in) + 2 H(+)(in). In terms of biological role, electrogenic proton-coupled amino-acid transporter that transports oligopeptides of 2 to 4 amino acids with a preference for dipeptides. Transports neutral and monovalently charged peptides with a proton to peptide stoichiometry of 1:1 or 2:1. Primarily responsible for the absorption of dietary di- and tripeptides from the small intestinal lumen. Mediates transepithelial transport of muramyl and N-formylated bacterial dipeptides contributing to recognition of pathogenic bacteria by the mucosal immune system. This Oryctolagus cuniculus (Rabbit) protein is Solute carrier family 15 member 1 (SLC15A1).